The following is a 205-amino-acid chain: N-(5'-phosphoribosyl)anthranilate isomerase (205 aa).

It belongs to the TrpF family.

The catalysed reaction is N-(5-phospho-beta-D-ribosyl)anthranilate = 1-(2-carboxyphenylamino)-1-deoxy-D-ribulose 5-phosphate. It functions in the pathway amino-acid biosynthesis; L-tryptophan biosynthesis; L-tryptophan from chorismate: step 3/5. The polypeptide is N-(5'-phosphoribosyl)anthranilate isomerase (Marinomonas sp. (strain MWYL1)).